A 215-amino-acid polypeptide reads, in one-letter code: Adenylate kinase (215 aa).

Residue 10 to 15 (GAGKGT) coordinates ATP. Residues 30–59 (STGDMLRAAIKAGTPLGLEAKKIIDEGGLV) are NMP. AMP contacts are provided by residues T31, R36, 57 to 59 (GLV), 85 to 88 (GFPR), and Q92. The segment at 122–159 (GRRVHLASGRTYHVTYNPPKTEGKDDVTGEDLIQRDDD) is LID. Residues R123 and 132–133 (TY) each bind ATP. The AMP site is built by R156 and R167. Q200 contributes to the ATP binding site.

The protein belongs to the adenylate kinase family. As to quaternary structure, monomer.

It is found in the cytoplasm. The catalysed reaction is AMP + ATP = 2 ADP. It functions in the pathway purine metabolism; AMP biosynthesis via salvage pathway; AMP from ADP: step 1/1. Its function is as follows. Catalyzes the reversible transfer of the terminal phosphate group between ATP and AMP. Plays an important role in cellular energy homeostasis and in adenine nucleotide metabolism. This is Adenylate kinase from Neisseria gonorrhoeae (strain ATCC 700825 / FA 1090).